Consider the following 787-residue polypeptide: Replication origin-binding protein (787 aa).

A Helicase ATP-binding domain is found at 39 to 195 (HFKTFSEQIK…SLCMPHFKSA (157 aa)). 52 to 59 (APMGSGKT) contributes to the ATP binding site.

Belongs to the herpesviridae OriBP family.

Functionally, probably involved in DNA replication. Binds the origin of replication (ori). The protein is Replication origin-binding protein (U73) of Human herpesvirus 7 (strain JI) (HHV-7).